A 349-amino-acid chain; its full sequence is Homeobox-leucine zipper protein HOX5 (349 aa).

Positions 83-142 (APEKKRRLTAEQVQMLERSFEEENKLEPERKTELARRLGMAPRQVAVWFQNRRARWKTKQ) form a DNA-binding region, homeobox. Positions 141-185 (KQLEHDFDRLKAAYDALAADHHALLSDNDRLRAQVISLTEKLQDK) are leucine-zipper. The disordered stretch occupies residues 181-253 (KLQDKETSPS…GTNDDGDGGA (73 aa)). Residues 188–198 (SPSSATITTAA) are compositionally biased toward low complexity.

It belongs to the HD-ZIP homeobox family. Class I subfamily. Homodimer. May form a heterodimer with HOX4. As to expression, expressed in seedlings, roots, leaves, nodes, internodes, flowers and embryo.

The protein localises to the nucleus. Probable transcription activator that binds to the DNA sequence 5'-CAAT[AT]ATTG-3'. The sequence is that of Homeobox-leucine zipper protein HOX5 (HOX5) from Oryza sativa subsp. japonica (Rice).